A 568-amino-acid chain; its full sequence is 2-succinyl-5-enolpyruvyl-6-hydroxy-3-cyclohexene-1-carboxylate synthase (568 aa).

Belongs to the TPP enzyme family. MenD subfamily. Homodimer. The cofactor is Mg(2+). Mn(2+) serves as cofactor. It depends on thiamine diphosphate as a cofactor.

It catalyses the reaction isochorismate + 2-oxoglutarate + H(+) = 5-enolpyruvoyl-6-hydroxy-2-succinyl-cyclohex-3-ene-1-carboxylate + CO2. Its pathway is quinol/quinone metabolism; 1,4-dihydroxy-2-naphthoate biosynthesis; 1,4-dihydroxy-2-naphthoate from chorismate: step 2/7. The protein operates within quinol/quinone metabolism; menaquinone biosynthesis. In terms of biological role, catalyzes the thiamine diphosphate-dependent decarboxylation of 2-oxoglutarate and the subsequent addition of the resulting succinic semialdehyde-thiamine pyrophosphate anion to isochorismate to yield 2-succinyl-5-enolpyruvyl-6-hydroxy-3-cyclohexene-1-carboxylate (SEPHCHC). The sequence is that of 2-succinyl-5-enolpyruvyl-6-hydroxy-3-cyclohexene-1-carboxylate synthase from Actinobacillus pleuropneumoniae serotype 7 (strain AP76).